Reading from the N-terminus, the 297-residue chain is Probable ABC transporter phosphite binding protein PhnD1 (297 aa).

Residues 1–24 form the signal peptide; it reads MFNLKYFLVSSSLLFSVFSSPVFS.

Belongs to the phosphate/phosphite/phosphonate binding protein family. As to quaternary structure, the complex may be composed of two ATP-binding proteins (PhnC1), two transmembrane proteins (PhnE1) and a solute-binding protein (PhnD1).

The protein localises to the periplasm. In terms of biological role, probably part of the ABC transporter complex PhnD1C1E1. Binds strongly to inorganic phosphite and with very weak affinities to methylphosphonate (MPn) and phosphate. This Prochlorococcus marinus (strain MIT 9301) protein is Probable ABC transporter phosphite binding protein PhnD1.